Consider the following 323-residue polypeptide: Replication factor C subunit 4 (323 aa).

ATP is bound by residues valine 12, valine 24, 49-57 (GMPGIGKTT), asparagine 145, and arginine 203.

This sequence belongs to the activator 1 small subunits family. Replication factor C (RFC) is a heteropentamer of subunits RFC1, RFC2, RFC3, RFC4 and RFC5 and forms a complex with POL30/PCNA in the presence of ATP. Component of the RAD24-RFC complex which consists of RAD14, RFC2, RFC3, RFC4 and RFC5 and associates with the checkpoint clamp DDC1:MEC3:RAD17 complex. Component of the ELG1-RFC complex which consists of ELG1, RFC2, RFC3, RFC4 and RFC5. Component of the CTF18-RFC complex, which consists of CTF18, CTF8, DCC1, RFC2, RFC3, RFC4 and RFC5. RFC4 interacts with ECO1.

The protein resides in the nucleus. Component of ATP-dependent clamp loader (RFC and RFC-like) complexes for DNA clamps, such as the POL30/PCNA homotrimer and the checkpoint clamp DDC1:MEC3:RAD17 complex. During a clamp loading circle, the RFC:clamp complex binds to DNA and the recognition of the double-stranded/single-stranded junction stimulates ATP hydrolysis by RFC. The complex presumably provides bipartite ATP sites in which one subunit supplies a catalytic site for hydrolysis of ATP bound to the neighboring subunit. Dissociation of RFC from the clamp leaves the clamp encircling DNA. Component of the replication factor C (RFC or activator 1) complex which loads POL30/PCNA and acts during elongation of primed DNA templates by DNA polymerase delta and epsilon. RFC has an essential but redundant activity in sister chromatid cohesion establishment. Component of the RFC-like complex CTF18-RFC which is required for efficient establishment of chromosome cohesion during S-phase and may load or unload POL30/PCNA. Component of the RFC-like RAD24-RFC complex which loads the checkpoint clamp DDC1:MEC3:RAD17 complex and is involved in DNA repair pathways. Component of the RFC-like ELG1-RFC complex which appears to have a role in DNA replication, replication fork re-start, recombination and repair. This chain is Replication factor C subunit 4 (RFC4), found in Saccharomyces cerevisiae (strain ATCC 204508 / S288c) (Baker's yeast).